The primary structure comprises 132 residues: Small ribosomal subunit protein uS8 (132 aa).

It belongs to the universal ribosomal protein uS8 family. As to quaternary structure, part of the 30S ribosomal subunit. Contacts proteins S5 and S12.

One of the primary rRNA binding proteins, it binds directly to 16S rRNA central domain where it helps coordinate assembly of the platform of the 30S subunit. This is Small ribosomal subunit protein uS8 from Clostridium beijerinckii (strain ATCC 51743 / NCIMB 8052) (Clostridium acetobutylicum).